A 228-amino-acid chain; its full sequence is HTH-type transcriptional regulator TfdT (228 aa).

The HTH lysR-type domain maps to M1–T58. Residues F18–Q37 constitute a DNA-binding region (H-T-H motif).

Belongs to the LysR transcriptional regulatory family.

It localises to the cytoplasm. Its function is as follows. Does not seem to be involved in the regulation of 3-chlorocatechol degradation. Does not activate the expression of its presumed target operon, tfdCDEF. The polypeptide is HTH-type transcriptional regulator TfdT (tfdT) (Cupriavidus pinatubonensis (strain JMP 134 / LMG 1197) (Cupriavidus necator (strain JMP 134))).